The chain runs to 174 residues: NADH-quinone oxidoreductase subunit I (174 aa).

4Fe-4S ferredoxin-type domains are found at residues 61-91 (LTVKKDGSLRCTACMLCATNCPAECIKITAA) and 103-132 (ISYEIDILRCVFCGFCEEACPVDAIRLGPE). Residues Cys-71, Cys-74, Cys-77, Cys-81, Cys-112, Cys-115, Cys-118, and Cys-122 each coordinate [4Fe-4S] cluster.

It belongs to the complex I 23 kDa subunit family. NDH-1 is composed of 14 different subunits. Subunits NuoA, H, J, K, L, M, N constitute the membrane sector of the complex. It depends on [4Fe-4S] cluster as a cofactor.

It is found in the cell inner membrane. The enzyme catalyses a quinone + NADH + 5 H(+)(in) = a quinol + NAD(+) + 4 H(+)(out). In terms of biological role, NDH-1 shuttles electrons from NADH, via FMN and iron-sulfur (Fe-S) centers, to quinones in the respiratory chain. The immediate electron acceptor for the enzyme in this species is believed to be ubiquinone. Couples the redox reaction to proton translocation (for every two electrons transferred, four hydrogen ions are translocated across the cytoplasmic membrane), and thus conserves the redox energy in a proton gradient. In Bdellovibrio bacteriovorus (strain ATCC 15356 / DSM 50701 / NCIMB 9529 / HD100), this protein is NADH-quinone oxidoreductase subunit I.